The sequence spans 59 residues: Potassium channel toxin alpha-KTx 15.5 (59 aa).

Positions 1–22 are cleaved as a signal peptide; the sequence is MKFSSIILLTLLICSMSIFGNC. Q23 carries the post-translational modification Pyrrolidone carboxylic acid. Cystine bridges form between C30–C50, C35–C55, and C39–C57.

The protein belongs to the short scorpion toxin superfamily. Potassium channel inhibitor family. Alpha-KTx 15 subfamily. As to expression, expressed by the venom gland.

Its subcellular location is the secreted. Functionally, blocker of A-type voltage-gated potassium channels of cerebellar granular cells. May also inhibit Kv4/KCND when coexpressed with DPP6 or DPP10. The occlusion of the outer entry of the K(+) conducting pore is partially reversible and affects both open and closed channels. It shares the same target in rat brain than BmTX3 (AC Q8I0L5) and AmmTX3 (AC P60208). The polypeptide is Potassium channel toxin alpha-KTx 15.5 (Androctonus australis (Sahara scorpion)).